The sequence spans 674 residues: Translation factor GUF1, mitochondrial (674 aa).

Residues 1–48 (MRGCLQPARWLTTATLRRPLLSCPRQLPTRYNPFPRPFHHAPVLQARQ) constitute a mitochondrion transit peptide. Positions 66–246 (ERYRNFCIVA…AIIESIPALL (181 aa)) constitute a tr-type G domain. GTP is bound by residues 75–82 (AHVDHGKS), 139–143 (DTPGH), and 193–196 (NKVD).

This sequence belongs to the TRAFAC class translation factor GTPase superfamily. Classic translation factor GTPase family. LepA subfamily.

The protein localises to the mitochondrion inner membrane. It catalyses the reaction GTP + H2O = GDP + phosphate + H(+). In terms of biological role, promotes mitochondrial protein synthesis. May act as a fidelity factor of the translation reaction, by catalyzing a one-codon backward translocation of tRNAs on improperly translocated ribosomes. Binds to mitochondrial ribosomes in a GTP-dependent manner. This Arthroderma otae (strain ATCC MYA-4605 / CBS 113480) (Microsporum canis) protein is Translation factor GUF1, mitochondrial.